The following is a 298-amino-acid chain: GTPase Era (298 aa).

Residues K4–E171 enclose the Era-type G domain. A G1 region spans residues G12–S19. G12–S19 contacts GTP. Positions Q38 to N42 are G2. Residues D59–G62 form a G3 region. Residues D59–V63 and N121–D124 contribute to the GTP site. The segment at N121–D124 is G4. Residues I150–A152 form a G5 region. The 79-residue stretch at T202–E280 folds into the KH type-2 domain.

Belongs to the TRAFAC class TrmE-Era-EngA-EngB-Septin-like GTPase superfamily. Era GTPase family. As to quaternary structure, monomer.

The protein localises to the cytoplasm. Its subcellular location is the cell membrane. In terms of biological role, an essential GTPase that binds both GDP and GTP, with rapid nucleotide exchange. Plays a role in 16S rRNA processing and 30S ribosomal subunit biogenesis and possibly also in cell cycle regulation and energy metabolism. This is GTPase Era from Carboxydothermus hydrogenoformans (strain ATCC BAA-161 / DSM 6008 / Z-2901).